Reading from the N-terminus, the 418-residue chain is Probable serine/threonine-protein kinase DDB_G0280461 (418 aa).

The Protein kinase domain occupies 14-271 (KIEENEFSKG…IVQTLDQLAI (258 aa)). Residues 20-28 (FSKGSFAKV) and lysine 41 each bind ATP. Aspartate 139 serves as the catalytic Proton acceptor. Disordered stretches follow at residues 327–356 (NNNN…NNNN) and 377–418 (SVNS…CLIN). A compositionally biased stretch (low complexity) spans 377-402 (SVNSSFSNSSLGSNGSNSSGTSTSSG). Residues 403–418 (GKKRSQKRKSWKCLIN) show a composition bias toward basic residues.

Belongs to the protein kinase superfamily. TKL Ser/Thr protein kinase family.

The catalysed reaction is L-seryl-[protein] + ATP = O-phospho-L-seryl-[protein] + ADP + H(+). It carries out the reaction L-threonyl-[protein] + ATP = O-phospho-L-threonyl-[protein] + ADP + H(+). The chain is Probable serine/threonine-protein kinase DDB_G0280461 from Dictyostelium discoideum (Social amoeba).